A 181-amino-acid chain; its full sequence is Large ribosomal subunit protein uL16 (181 aa).

This sequence belongs to the universal ribosomal protein uL16 family. In terms of assembly, part of the 50S ribosomal subunit.

In Pyrococcus furiosus (strain ATCC 43587 / DSM 3638 / JCM 8422 / Vc1), this protein is Large ribosomal subunit protein uL16.